The sequence spans 87 residues: MENDKGQLVELYVPRKCSATNRIIKAKDHASVQISIAKVDEDGRAIAGENITYALSGYVRGRGEADDSLNRLAQQDGLLKNVWSYSR.

It belongs to the eukaryotic ribosomal protein eS21 family. As to quaternary structure, component of the small ribosomal subunit. Mature ribosomes consist of a small (40S) and a large (60S) subunit. The 40S subunit contains about 33 different proteins and 1 molecule of RNA (18S). The 60S subunit contains about 49 different proteins and 3 molecules of RNA (25S, 5.8S and 5S).

The protein localises to the cytoplasm. In terms of biological role, required for the processing of the 20S rRNA-precursor to mature 18S rRNA in a late step of the maturation of 40S ribosomal subunits. Has a physiological role leading to 18S rRNA stability. In Candida albicans (Yeast), this protein is Small ribosomal subunit protein eS21 (RPS21).